Consider the following 444-residue polypeptide: C4-dicarboxylate transport protein 1 (444 aa).

Helical transmembrane passes span serine 9 to proline 29, phenylalanine 42 to isoleucine 62, serine 78 to tyrosine 98, isoleucine 152 to glutamine 172, isoleucine 190 to threonine 210, leucine 221 to glycine 241, phenylalanine 307 to alanine 327, valine 354 to valine 374, and phenylalanine 380 to isoleucine 400.

Belongs to the dicarboxylate/amino acid:cation symporter (DAACS) (TC 2.A.23) family.

The protein resides in the cell inner membrane. Its function is as follows. Responsible for the transport of dicarboxylates such as succinate, fumarate, and malate from the periplasm across the membrane. The protein is C4-dicarboxylate transport protein 1 of Pseudomonas paraeruginosa (strain DSM 24068 / PA7) (Pseudomonas aeruginosa (strain PA7)).